The primary structure comprises 792 residues: Carboxysome assembly protein CsoS2 (792 aa).

Basic and acidic residues predominate over residues Met-1 to Lys-15. The tract at residues Met-1 to Arg-235 is N-terminal domain. Disordered stretches follow at residues Met-1–Ser-259, Gln-280–Ser-299, and His-338–Gly-359. One copy of the N-repeat 1 repeat lies at Arg-7–Lys-22. 2 stretches are compositionally biased toward polar residues: residues Leu-17–Arg-36 and Asp-69–Ser-82. The stretch at Arg-94–Gln-109 is one N-repeat 2 repeat. 2 stretches are compositionally biased toward basic and acidic residues: residues Val-97–Arg-106 and Lys-113–Ser-126. Residues Asp-161–Pro-175 are compositionally biased toward polar residues. N-repeat repeat units follow at residues Arg-187–Lys-202 and Arg-225–Ala-240. Basic and acidic residues predominate over residues Gly-218–Ser-236. The interval Ala-240 to Ala-615 is middle region. M-repeat repeat units lie at residues Lys-270–Cys-319, Lys-330–Cys-379, Lys-388–Tyr-427, Lys-441–Cys-490, Lys-500–Cys-549, and Arg-560–Cys-609. Disordered stretches follow at residues Ala-608–Ile-662 and His-687–Gly-792. The interval Gly-616–Gly-792 is C-terminal domain. Polar residues-rich tracts occupy residues Asn-618 to Ser-636 and Val-651 to Ile-662. C-repeat repeat units lie at residues Ser-633–Gln-678 and Thr-703–Ser-738. Residues Glu-763–Gly-792 form a C-terminal peptide (CTP) region. A compositionally biased stretch (polar residues) spans Val-764 to Thr-785.

This sequence belongs to the CsoS2 family. Probably interacts with the carboxysome major shell protein CsoS1 via the N-terminal domain; this complex probably also interacts with RuBisCO. In terms of processing, has been suggested to undergo ribosomal frameshifting, as does its ortholog in H.neapolitanus. The exact position of the putative frameshift is not given, but it would probably occur in the sixth M-repeat and remove the C-terminus.

It localises to the carboxysome. Its function is as follows. Required for alpha-carboxysome (Cb) assembly, mediates interaction between RuBisCO and the Cb shell. The protein is probably intrinsically disordered. The C-terminal repeats act as the encapsulation signal to target proteins to the Cb; they are necessary and sufficient to target both CsoS2 and foreign proteins to the Cb. The N-terminal repeats of this protein bind simultaneously to both subunits of RuBisCO. Probably also interacts with the major shell proteins (CsoS1); that interaction would increase the local concentration of CsoS2 so that it can condense RuBisCO and full carboxysomes can be formed. This is Carboxysome assembly protein CsoS2 from Prochlorococcus marinus (strain MIT 9313).